The chain runs to 232 residues: GTP cyclohydrolase III (232 aa).

The protein belongs to the archaeal-type GTP cyclohydrolase family.

The enzyme catalyses GTP + 3 H2O = 2-amino-5-formylamino-6-(5-phospho-D-ribosylamino)pyrimidin-4(3H)-one + 2 phosphate + 2 H(+). In terms of biological role, catalyzes the formation of 2-amino-5-formylamino-6-ribofuranosylamino-4(3H)-pyrimidinone ribonucleotide monophosphate and inorganic phosphate from GTP. Also has an independent pyrophosphate phosphohydrolase activity. The polypeptide is GTP cyclohydrolase III (Saccharolobus islandicus (strain Y.N.15.51 / Yellowstone #2) (Sulfolobus islandicus)).